Consider the following 257-residue polypeptide: Acetylglutamate kinase (257 aa).

Residues 43-44, Arg65, and Asn157 each bind substrate; that span reads GG. ATP contacts are provided by residues 180–185 and 208–210; these read DISSIL and IIT.

It belongs to the acetylglutamate kinase family. ArgB subfamily. Homodimer.

It is found in the cytoplasm. It carries out the reaction N-acetyl-L-glutamate + ATP = N-acetyl-L-glutamyl 5-phosphate + ADP. Its pathway is amino-acid biosynthesis; L-arginine biosynthesis; N(2)-acetyl-L-ornithine from L-glutamate: step 2/4. Its function is as follows. Catalyzes the ATP-dependent phosphorylation of N-acetyl-L-glutamate. The chain is Acetylglutamate kinase from Buchnera aphidicola subsp. Acyrthosiphon pisum (strain Tuc7).